We begin with the raw amino-acid sequence, 132 residues long: DNA-directed RNA polymerase subunit omega (132 aa).

The disordered stretch occupies residues 76–105; sequence EVDEPEQDAASIAEGQLTSGSQDEDEMPET.

This sequence belongs to the RNA polymerase subunit omega family. In terms of assembly, the RNAP catalytic core consists of 2 alpha, 1 beta, 1 beta' and 1 omega subunit. When a sigma factor is associated with the core the holoenzyme is formed, which can initiate transcription.

It catalyses the reaction RNA(n) + a ribonucleoside 5'-triphosphate = RNA(n+1) + diphosphate. Functionally, promotes RNA polymerase assembly. Latches the N- and C-terminal regions of the beta' subunit thereby facilitating its interaction with the beta and alpha subunits. The polypeptide is DNA-directed RNA polymerase subunit omega (Allorhizobium ampelinum (strain ATCC BAA-846 / DSM 112012 / S4) (Agrobacterium vitis (strain S4))).